Here is a 279-residue protein sequence, read N- to C-terminus: MNTLRTVALMTVLTLLLVWAGGMMGGRGGALFALIMAAVMNLGSYWFSDKIVIAMYRGREVSSGPLFSVVQELCLRNALPMPKVYILPQATPNAFATGRNPKHAAVAATEGILQVLSREELMGVMAHEMSHVRHRDILIGSIAATIAGAISYLAHMAQWAALFGGFGGRDDDDGNPLGLLLLIIFAPLAAMLVQMAISRSREYAADRGGAALCGNPHYLANALRKLEMANSRQPMPKVNEATAHMFIVNPLRGGGLKSLFSTHPPVDERIRRLENMTVL.

2 consecutive transmembrane segments (helical) span residues T6–G26 and G28–S48. H127 contributes to the Zn(2+) binding site. E128 is a catalytic residue. A Zn(2+)-binding site is contributed by H131. The next 2 helical transmembrane spans lie at I137–A157 and L177–I197. Residue E202 coordinates Zn(2+).

This sequence belongs to the peptidase M48B family. Zn(2+) is required as a cofactor.

It localises to the cell inner membrane. The sequence is that of Protease HtpX homolog from Syntrophotalea carbinolica (strain DSM 2380 / NBRC 103641 / GraBd1) (Pelobacter carbinolicus).